We begin with the raw amino-acid sequence, 465 residues long: Clusterin-like protein 1 (465 aa).

The N-terminal stretch at 1–20 (MKPPILVFIVYLLQLRDCQC) is a signal peptide. Positions 62–107 (LMERREEEHSKLMRTLKKCREEKQEALKLMNEVQEHLEEEERLCQV) form a coiled coil. 5 cysteine pairs are disulfide-bonded: C105-C333, C116-C325, C119-C322, C124-C315, and C131-C305. 2 N-linked (GlcNAc...) asparagine glycosylation sites follow: N196 and N257. A disordered region spans residues 280–300 (LSKQDKDSAHGGPSSTTWPVR). N-linked (GlcNAc...) asparagine glycans are attached at residues N311, N351, N412, and N430.

It belongs to the clusterin family.

It is found in the secreted. This Bos taurus (Bovine) protein is Clusterin-like protein 1.